The following is a 373-amino-acid chain: Asporin (373 aa).

Residues 1–15 (MKEYVMLLLLAVCSA) form the signal peptide. A propeptide spanning residues 16–32 (KPFFSPSHTALKNMMLK) is cleaved from the precursor. S48 is a glycosylation site (O-linked (GalNAc...) serine). The region spanning 59 to 95 (FFPFDLFPTCPFGCQCYSRVVHCSDLGLTSVPNNIPF) is the LRRNT domain. Disulfide bonds link C68–C74 and C72–C81. LRR repeat units follow at residues 96 to 117 (DTRMVDLQNNKIKEIKENDFKG), 120 to 141 (SLYALILNNNKLTKIHPKTFLT), 144 to 166 (KLRRLYLSHNQLSEIPLNLPKSL), 167 to 186 (AELRIHDNKVKKIQKDTFKG), 189 to 212 (ALHVLEMSANPLENNGIEPGAFEG), 235 to 255 (TLLELHLDFNKISTVELEDLK), 259 to 280 (ELQRLGLGNNRITDIENGTFAN), 283 to 305 (RVREIHLEHNKLKKIPSGLQELK), 306 to 327 (YLQIIFLHYNSIAKVGVNDFCP), 328 to 349 (TVPKMKKSLYSAISLFNNPMKY), and 350 to 373 (WEIQPATFRCVLGRMSVQLGNVGK). Positions 159-205 (PLNLPKSLAELRIHDNKVKKIQKDTFKGMNALHVLEMSANPLENNGI) are interaction with TGFB1. N275 carries an N-linked (GlcNAc...) asparagine glycan. C326 and C359 are oxidised to a cystine.

The protein belongs to the small leucine-rich proteoglycan (SLRP) family. SLRP class I subfamily. As to quaternary structure, interacts with type I collagen. DCN can inhibit collagen binding. Interacts with TGFB1, TGFB2 and TGFB3. DCN, BGN, and FMOD inhibit binding to TGFB1. Interacts with BMP2. Interacts in vitro with type II collagen. Higher expression in heart, also detected in kidney, stomach, testes, and skin but only weakly in lung, skeletal muscle, small intestine, and thymus. Expressed specifically and predominantly in the periodontal ligament (PDL). During tooth development, strong expression is seen in the dental follicle, which is the progenitor tissue that forms cementum, alveolar bone, and the PDL. Expressed in the perichondria of the maxilla, mandible, vertebrae, and long bones. Predominantly expressed in the perichondrium/periosteum of long bones (at protein level).

The protein resides in the secreted. Its subcellular location is the extracellular space. It is found in the extracellular matrix. Its function is as follows. Binds calcium and plays a role in osteoblast-driven collagen biomineralization activity. Critical regulator of TGF-beta in articular cartilage and plays an essential role in cartilage homeostasis and osteoarthritis (OA) pathogenesis. Negatively regulates chondrogenesis in the articular cartilage by blocking the TGF-beta/receptor interaction on the cell surface and inhibiting the canonical TGF-beta/Smad signal. Negatively regulates periodontal ligament (PDL) differentiation and mineralization to ensure that the PDL is not ossified and to maintain homeostasis of the tooth-supporting system. Inhibits BMP2-induced cytodifferentiation of PDL cells by preventing its binding to BMPR1B/BMP type-1B receptor, resulting in inhibition of BMP-dependent activation of SMAD proteins. Inhibits the interaction between TGFB1 and TGF-beta receptor type II in the presence of heparin/heparan sulfate in vitro. The polypeptide is Asporin (Aspn) (Mus musculus (Mouse)).